Here is a 376-residue protein sequence, read N- to C-terminus: c-di-GMP synthase (376 aa).

Belongs to the CD-NTase family. G05 subfamily.

It catalyses the reaction 2 GTP = 3',3'-c-di-GMP + 2 diphosphate. Its function is as follows. Cyclic nucleotide synthase (second messenger synthase) of a CBASS antivirus system. CBASS (cyclic oligonucleotide-based antiphage signaling system) provides immunity against bacteriophage. The CD-NTase protein synthesizes cyclic nucleotides in response to infection; these serve as specific second messenger signals. The signals activate a diverse range of effectors, leading to bacterial cell death and thus abortive phage infection. A type I-D CBASS(GG) system. Functionally, cyclic dinucleotide synthase that catalyzes the synthesis of c-di-GMP, has no activity with other NTP substrates. The sequence is that of c-di-GMP synthase from Roseivirga ehrenbergii (strain DSM 102268 / JCM 13514 / KCTC 12282 / NCIMB 14502 / KMM 6017).